The chain runs to 505 residues: MELQFPLFSIFFVTILFFFLFKKSSKTTKNLPPGPRKLPIIGNILELAGEVQHRVLAELSQKHGPIMHLQLAEISAIVVSSSKVAKEVLKTHDLAFSDRAQLQLSKIILKGCKDVVFNDYDDYWRQMRKICTVELLTANKVNSFRAIREDEAWNLVESIKTSLDSPVNLTHKFTSLTNAITCRAAIGERSKYQDELVHLIELMAALGGGFDIADLFPSYKFLHFLSGLRSKLEKVRKRLDDIFYNILKEHEEKRAKTKNSDGRVAGEEDLVDVLLRVQEKGGLQFPISSNNIQGIICDMLTAGTDTASTALDWAMSELVRYPSVLHKAQAEVREAFKGKTKIHEDDVQGLSYLKLVIKETLRLHPPAPLLLPKECREQCVIEGYTIPVRTKLIVNAWAIGRDPEYWVNAESFDPERFSNKSIDYNGTNLNYIPFGAGRRSCPGIAFGIATIELPLALLLYHFNWGMPGGIKPSALDMNEVLGATLKRKTNLLLSATSYTPNEDSS.

The helical transmembrane segment at 1–21 (MELQFPLFSIFFVTILFFFLF) threads the bilayer. A heme-binding site is contributed by cysteine 441. Residues 442 to 462 (PGIAFGIATIELPLALLLYHF) traverse the membrane as a helical segment.

The protein belongs to the cytochrome P450 family. Heme serves as cofactor.

The protein resides in the membrane. Its function is as follows. Probable heme-thiolate monooxygenase. The polypeptide is Cytochrome P450 CYP71D313 (Panax ginseng (Korean ginseng)).